A 406-amino-acid chain; its full sequence is Inner kinetochore subunit OKP1 (406 aa).

2 disordered regions span residues 1-37 (MAAD…SDSS) and 59-122 (TQSK…TSGE). Residues 8–21 (FLQNIENDSINNGQ) show a composition bias toward polar residues. Positions 26 to 37 (SPNRSSSESDSS) are enriched in low complexity. Residues 69 to 78 (NSDDAEEGEI) show a composition bias toward acidic residues. Ser70 bears the Phosphoserine mark. Basic and acidic residues-rich tracts occupy residues 79 to 89 (EERTNKEEGQY) and 97 to 106 (LRFEVGKEST). A compositionally biased stretch (polar residues) spans 107-122 (GKLQSHLSDGSATSGE). The stretch at 239-285 (SKRQFIQNRYSQELQNNERLEAILSREQNLLEETRKLCMNLKTNNKK) forms a coiled coil. Residues 317–340 (MHPDGPVTFRNDSHELNLMLNDPI) form a CTF19-MCM21 binding motif region. Residues 353–400 (VLSLLPSLKEYTKKSKELKETMGQMISDSHEEEIKEVFVPHHESHQDK) are interaction with NKP1-NKP2. The interval 379 to 406 (SDSHEEEIKEVFVPHHESHQDKTEEDIH) is disordered. The span at 380–406 (DSHEEEIKEVFVPHHESHQDKTEEDIH) shows a compositional bias: basic and acidic residues.

It belongs to the CENP-Q/OKP1 family. As to quaternary structure, component of the heterotetrameric kinetochore subcomplex COMA, which consists of AME1, CTF19, MCM21 and OKP1. The COMA subcomplex is part of a larger constitutive centromere-associated network (CCAN) (also known as central kinetochore CTF19 complex in yeast), which is composed of at least AME1, CHL4, CNN1, CTF3, CTF19, IML3, MCM16, MCM21, MCM22, MHF1, MHF2, MIF2, NKP1, NKP2, OKP1 and WIP1. COMA binds the centromeric nucleosome-binding protein MIF2, and to the outer kinetochore MIND subcomplex. OKP1 interacts directly with AME1, with an NKP1-NKP2 dimer, and with CTF19-MCM21.

The protein resides in the nucleus. It localises to the chromosome. The protein localises to the centromere. It is found in the kinetochore. Functionally, component of the kinetochore, a multiprotein complex that assembles on centromeric DNA and attaches chromosomes to spindle microtubules, mediating chromosome segregation and sister chromatid segregation during meiosis and mitosis. Component of the inner kinetochore COMA complex, which connects centromere-associated proteins and the outer kinetochore. COMA interacts with other inner kinetochore proteins to form the inner kinetochore constitutive centromere-associated network (CCAN), which serves as a structural platform for outer kinetochore assembly. The polypeptide is Inner kinetochore subunit OKP1 (Saccharomyces cerevisiae (strain ATCC 204508 / S288c) (Baker's yeast)).